Reading from the N-terminus, the 133-residue chain is MFYLRVLCVQRRLVREINKLSSFESNWLFLLFLVRVCRQLKTVTVLIVPVLPVYTNKVLRCSQCDWHEPANLDSIYQRSSHDDDLPTIKGSDASTQQYERKTYITDASPESQNLFLSKSKEEGVIFLCIQVSF.

The protein belongs to the UPF0768 family.

This chain is UPF0768 protein C977.18, found in Schizosaccharomyces pombe (strain 972 / ATCC 24843) (Fission yeast).